A 391-amino-acid chain; its full sequence is Phosphoprotein (391 aa).

Residues Thr10 and Thr16 each carry the phosphothreonine modification. The segment covering 54-65 has biased composition (polar residues); sequence QKNIQHPTASHQ. Disordered regions lie at residues 54 to 98 and 145 to 186; these read QKNI…EPLF and TSTP…RSGS. Ser69 carries the post-translational modification Phosphoserine. Thr91, Thr150, and Thr165 each carry phosphothreonine. At Ser188 the chain carries Phosphoserine. The stretch at 218–245 forms a coiled coil; the sequence is ANEIMDLLRGMDARLQHLEQKVDKVLAQ. Thr250 bears the Phosphothreonine mark. Ser257 carries the post-translational modification Phosphoserine. Thr258 and Thr282 each carry phosphothreonine. 2 positions are modified to phosphoserine: Ser292 and Ser294. Residue Thr298 is modified to Phosphothreonine. A phosphoserine mark is found at Ser301 and Ser374. Residues 343 to 391 are interaction with the nucleoprotein; that stretch reads AGRKVMITKMITDCVANPQMKQAFEQRLAKASTEDALNDIKRDIIRNAI. A Phosphothreonine modification is found at Thr375.

Belongs to the rubulavirus/avulavirus P protein family. Homotetramer. Interacts (via multimerization domain) with polymerase L; this interaction forms the polymerase L-P complex. Interacts (via N-terminus) with N0 (via Ncore); this interaction allows P to chaperon N0 to avoid N polymerization before encapsidation. Interacts (via C-terminus) with N-RNA template; this interaction positions the polymerase on the template for both transcription and replication. Interacts with host RPS6KB1 kinase; this interaction may play a role in the viral replication and transcription.

The protein resides in the virion. Essential cofactor of the RNA polymerase L that plays a central role in the transcription and replication by forming the polymerase complex with RNA polymerase L and recruiting L to the genomic N-RNA template for RNA synthesis. Also plays a central role in the encapsidation of nascent RNA chains by forming the encapsidation complex with the nucleocapsid protein N (N-P complex). Acts as a chaperone for newly synthesized free N protein, so-called N0, allowing encapsidation of nascent RNA chains during replication. The nucleoprotein protein N prevents excessive phosphorylation of P, which leads to down-regulation of viral transcription/ replication. Participates, together with N, in the formation of viral factories (viroplasms), which are large inclusions in the host cytoplasm where replication takes place. This Mumps virus genotype N (strain L-Zagreb vaccine) (MuV) protein is Phosphoprotein.